The sequence spans 219 residues: Elongation factor Ts (219 aa).

Positions 82–85 (TDFV) are involved in Mg(2+) ion dislocation from EF-Tu.

This sequence belongs to the EF-Ts family.

Its subcellular location is the cytoplasm. Functionally, associates with the EF-Tu.GDP complex and induces the exchange of GDP to GTP. It remains bound to the aminoacyl-tRNA.EF-Tu.GTP complex up to the GTP hydrolysis stage on the ribosome. The sequence is that of Elongation factor Ts from Anaeromyxobacter sp. (strain K).